Reading from the N-terminus, the 135-residue chain is Large ribosomal subunit protein bL19 (135 aa).

The protein belongs to the bacterial ribosomal protein bL19 family.

Functionally, this protein is located at the 30S-50S ribosomal subunit interface and may play a role in the structure and function of the aminoacyl-tRNA binding site. This chain is Large ribosomal subunit protein bL19, found in Xanthomonas campestris pv. campestris (strain 8004).